Here is a 419-residue protein sequence, read N- to C-terminus: Alpha-galactosidase A (419 aa).

The first 31 residues, 1–31 (MKLLSRDTRLVCELALCPLALVFWSILGVRA), serve as a signal peptide directing secretion. Intrachain disulfides connect C52–C94 and C56–C63. A glycan (N-linked (GlcNAc...) asparagine) is linked at N139. Residues C142 and C172 are joined by a disulfide bond. The active-site Nucleophile is D170. At Y186 the chain carries Phosphotyrosine. N192 carries an N-linked (GlcNAc...) asparagine glycan. C202 and C223 form a disulfide bridge. 203-207 (EWPLY) contributes to the substrate binding site. N-linked (GlcNAc...) asparagine glycosylation occurs at N215. Residue D231 is the Proton donor of the active site. A disulfide bond links C378 and C382.

It belongs to the glycosyl hydrolase 27 family. In terms of assembly, homodimer.

The protein resides in the lysosome. It catalyses the reaction Hydrolysis of terminal, non-reducing alpha-D-galactose residues in alpha-D-galactosides, including galactose oligosaccharides, galactomannans and galactolipids.. The enzyme catalyses a globoside Gb3Cer (d18:1(4E)) + H2O = a beta-D-Gal-(1-&gt;4)-beta-D-Glc-(1&lt;-&gt;1)-Cer(d18:1(4E)) + D-galactose. It carries out the reaction a globoside Gb3Cer + H2O = a beta-D-galactosyl-(1-&gt;4)-beta-D-glucosyl-(1&lt;-&gt;1)-ceramide + D-galactose. Galactosylgalactosylglucosylceramidase activity is stimulated by saposin B and ammonium chloride. Its function is as follows. Catalyzes the hydrolysis of glycosphingolipids and participates in their degradation in the lysosome. This is Alpha-galactosidase A from Mus musculus (Mouse).